Here is a 488-residue protein sequence, read N- to C-terminus: Beta-amylase (488 aa).

Positions 51, 91, and 99 each coordinate substrate. The Proton donor role is filled by Glu184. Residues Lys293, His298, and Thr340 each contribute to the substrate site. Glu378 acts as the Proton acceptor in catalysis. Residues 379-380 (NA) and Arg418 contribute to the substrate site.

It belongs to the glycosyl hydrolase 14 family.

It carries out the reaction Hydrolysis of (1-&gt;4)-alpha-D-glucosidic linkages in polysaccharides so as to remove successive maltose units from the non-reducing ends of the chains.. This chain is Beta-amylase (BMY1), found in Zea mays (Maize).